A 238-amino-acid chain; its full sequence is Sarcospan (238 aa).

The interval 1-33 (MGKDRQPRGQQRQGDAAGPDDPGPKKGAGTREQ) is disordered. Over 1 to 48 (MGKDRQPRGQQRQGDAAGPDDPGPKKGAGTREQRGEEEAQTCCGCRFP) the chain is Extracellular. The segment covering 8–20 (RGQQRQGDAAGPD) has biased composition (low complexity). A helical membrane pass occupies residues 49–69 (LLLALLQLALGVAVTVVGFLM). Residues 70–81 (ASVSSSLLVRAT) lie on the Cytoplasmic side of the membrane. A helical transmembrane segment spans residues 82–102 (PYWAGIIVCVVAYLGLFMLCV). Residues 103-117 (SYQVDERTCIQFSMK) lie on the Cytoplasmic side of the membrane. Residues 118–138 (LLYFVLSALGLVVCVLAVAFA) traverse the membrane as a helical segment. At 139–188 (AHHYSLLTHLTCENAPDSCQCKLPSSEPLSRTFVYRDVTDCTSITGTFQV) the chain is on the extracellular side. Residues 189–209 (FLLVQMVLNLVCGLVCLVACF) form a helical membrane-spanning segment. Topologically, residues 210–238 (VMWKHRYQVFYVGVRMCPLSASEGQQQKV) are cytoplasmic.

The protein resides in the cell membrane. Its subcellular location is the sarcolemma. It is found in the postsynaptic cell membrane. In terms of biological role, component of the dystrophin-glycoprotein complex (DGC), a complex that spans the muscle plasma membrane and forms a link between the F-actin cytoskeleton and the extracellular matrix. Preferentially associates with the sarcoglycan subcomplex of the DGC. This is Sarcospan (SSPN) from Oryctolagus cuniculus (Rabbit).